The following is a 745-amino-acid chain: Aminopeptidase NAALADL1 (745 aa).

At 1 to 6 (MHWVKI) the chain is on the cytoplasmic side. The chain crosses the membrane as a helical; Signal-anchor for type II membrane protein span at residues 7-28 (LGVALGAAALLGLGIILGHFAI). At 29–745 (PKATSPLTSS…AATLVPVADL (717 aa)) the chain is on the extracellular side. Residues Asn128, Asn141, and Asn235 are each glycosylated (N-linked (GlcNAc...) asparagine). Thr263 and Leu266 together coordinate Ca(2+). 3 N-linked (GlcNAc...) asparagine glycosylation sites follow: Asn279, Asn302, and Asn329. A disulfide bridge connects residues Cys301 and Cys318. Positions 373 and 383 each coordinate Zn(2+). Glu421 (proton donor/acceptor) is an active-site residue. Glu422 contributes to the Zn(2+) binding site. Residues Glu430 and Glu433 each contribute to the Ca(2+) site. Asp450 is a Zn(2+) binding site. Asn456 and Asn497 each carry an N-linked (GlcNAc...) asparagine glycan. His550 provides a ligand contact to Zn(2+). 2 N-linked (GlcNAc...) asparagine glycosylation sites follow: Asn593 and Asn620.

This sequence belongs to the peptidase M28 family. M28B subfamily. As to quaternary structure, homodimer. Requires Zn(2+) as cofactor. Post-translationally, N-glycosylated.

The protein resides in the apical cell membrane. Functionally, aminopeptidase with broad substrate specificity. Has lower activity with substrates that have Asp or Glu in the P2' position, or Pro in the P3' position. Lacks activity with substrates that have both Pro in the P3' position and Asp or Glu in the P2' position. Lacks carboxypeptidase activity. Lacks dipeptidyl-peptidase IV type activity. This Mus musculus (Mouse) protein is Aminopeptidase NAALADL1 (Naaladl1).